Reading from the N-terminus, the 393-residue chain is Pre-mRNA splicing factor SR-like 1 (393 aa).

The tract at residues 173 to 393 (MNLPTKPSGS…VIKLGGSSWR (221 aa)) is disordered. The span at 249–312 (QSRDYYSDRD…RNDYEDDRSR (64 aa)) shows a compositional bias: basic and acidic residues. A Nuclear localization signal motif is present at residues 301-308 (SRRNDYED). Residues 313-325 (HDRRSRSRSRSRS) are compositionally biased toward basic residues. Composition is skewed to basic and acidic residues over residues 329-346 (QIER…KEKS) and 356-385 (KLKD…EEVI).

It belongs to the PRP38 family. Post-translationally, phosphorylated. As to expression, mostly expressed in siliques and leaves, also present in seedlings, flowers and stems, and, at low levels, in roots.

It is found in the nucleus. Its function is as follows. May be required for pre-mRNA splicing. Confers salt tolerance to LiCl and NaCl. This Arabidopsis thaliana (Mouse-ear cress) protein is Pre-mRNA splicing factor SR-like 1.